A 699-amino-acid chain; its full sequence is MVRFFGLNKKKNEEKENTDLPADNEQNAAETSSSNVSGNEERIDPNSHDTNPENANNDDASTTFGSSIQSSSIFSRGRMTYGTGASSSMATSEMRSHSSGHSGSKNSKNLQGFKDVGKPLRAVSFLSPVKEEESQDTQNTLDVSSSTSSTLATSENARENSFTSRRSITLEYIHKSLSELEENLVDIMDDIHQDVISISKAVIEAIEYFKEFLPTTRDRIPYRISLEKSSSLRKINKIVLHFLDNLLVSDAFSNSRSILLRRFYFFLKKLNLITDDDLISESGVLPCLSVFCIGSHCNLPSMDKLGMILDELTKMDSSIISDQEGAFIAPILRGITPKSSILTIMFGLPNLQHEHYEMIKVLYSLFPDVHMYCVKDYIKKAASAVGSIPSHTAATIDTIAPTKFQFSPPYAVSENPLELPISMSLSTETSAKITGTLGGYLFPQTGSDKKFSQFASCSFAITCAHVVLSEKQDYPNVMVPSNVLQTSYKKVLTKESDRYPDGSVEKTAFLEEVQRIDQNLNWQKSNKFGQVVWGERAIVDHRLSDFAIIKVNSSFKCQNTLGNGLKSFPDPTLRFQNLHVKRKIFKMKPGMKVFKIGASTGYTSGELNSTKLVYWADGKLQSSEFVVASPTPLFASAGDSGAWILTKLEDRLGLGLVGMLHSYDGEQRQFGLFTPIGDILERLHAVTKIQWDIDPQLDG.

Disordered regions lie at residues Met1–Phe113 and Pro128–Arg158. Positions Met1 to Ala381 are excised as a propeptide. The span at Asn24–Gly38 shows a compositional bias: polar residues. A compositionally biased stretch (basic and acidic residues) spans Asn39 to Asn51. Residues Ser61–Arg78 show a composition bias toward low complexity. Positions Thr83–Glu93 are enriched in polar residues. 2 stretches are compositionally biased toward low complexity: residues His97 to Asn109 and Ser144 to Ser154. Residues Phe459–Gly699 form a serine protease region. Residues His465, Asp545, and Ser640 each act as charge relay system in the active site.

Belongs to the peptidase S64 family. In terms of assembly, component of the plasma membrane SPS (SSY1-PTR3-SSY5) amino acid sensor complex. In terms of processing, the propeptide is autoproteolytically cleaved from the catalytic domain but remains associated, forming an inactive protease complex. This processing occurs even in the absence of signaling.

It is found in the cell membrane. Protease component of the SPS-sensor system, which regulates the expression of several amino acid-metabolizing enzymes and amino acid- and peptide-permeases in response to extracellular amino acid levels by controlling the activity of two transcription factors, STP1 and STP2. Catalyzes the activation of these transcription factors, which are synthesized as latent cytoplasmic precursors, by proteolytic removal of an N-terminal inhibitory domain containing cytoplasmic retention motifs. SSY5 binds as an inactive protease complex to STP1. In response to extracellular amino acids and dependent on the other SPS-sensor components, the inhibitory propeptide is induced to dissociate, and thereby enables the catalytic domain to process STP1. The polypeptide is SPS-sensor serine protease component SSY5 (SSY5) (Saccharomyces cerevisiae (strain ATCC 204508 / S288c) (Baker's yeast)).